Reading from the N-terminus, the 123-residue chain is MALNKEDILTWLEEAKTSEVVELITAIEEKFGVTAAAVAVAAGPGPAAGGVEEQTEFDVMLVSFGDSKINVIKEVRAITGLGLGEAKALVESAPKAVKEGVSKSDAEEIKKKLEAVGAKVEIK.

The protein belongs to the bacterial ribosomal protein bL12 family. As to quaternary structure, homodimer. Part of the ribosomal stalk of the 50S ribosomal subunit. Forms a multimeric L10(L12)X complex, where L10 forms an elongated spine to which 2 to 4 L12 dimers bind in a sequential fashion. Binds GTP-bound translation factors.

Its function is as follows. Forms part of the ribosomal stalk which helps the ribosome interact with GTP-bound translation factors. Is thus essential for accurate translation. The polypeptide is Large ribosomal subunit protein bL12 (Borrelia duttonii (strain Ly)).